We begin with the raw amino-acid sequence, 491 residues long: LETM1 domain-containing protein LETM2, mitochondrial (491 aa).

Residues 1–25 constitute a mitochondrion transit peptide; it reads MAFYSYNSVLAIARTRFPSHFVHPT. The Mitochondrial intermembrane segment spans residues 26 to 177; the sequence is CSSYSPSCAF…LLRTCVDFFR (152 aa). Positions 94 to 109 are enriched in polar residues; it reads EQATKHPQVTSPQATK. The interval 94 to 115 is disordered; that stretch reads EQATKHPQVTSPQATKETGMEI. A helical membrane pass occupies residues 178–198; that stretch reads LVPFMVFLIVPFMEFLLPVFL. Over 199–491 the chain is Mitochondrial matrix; that stretch reads KLFPEMLPST…QNSKASSKGA (293 aa). A coiled-coil region spans residues 208-235; that stretch reads TFESESKKEEKQKKKMAVKLELAKFLQE. A Letm1 RBD domain is found at 221–438; that stretch reads KKMAVKLELA…LAPQLKGTKD (218 aa). The tract at residues 435–491 is disordered; sequence GTKDEDFIQPPPVTSSPITPSTPISLPKGPITSSEEPTLQAKSQMTAQNSKASSKGA. Residues 449-461 are compositionally biased toward low complexity; the sequence is SSPITPSTPISLP. The segment covering 465–491 has biased composition (polar residues); that stretch reads ITSSEEPTLQAKSQMTAQNSKASSKGA.

The protein localises to the mitochondrion inner membrane. The chain is LETM1 domain-containing protein LETM2, mitochondrial (LETM2) from Homo sapiens (Human).